Reading from the N-terminus, the 282-residue chain is Phosphatidylserine decarboxylase proenzyme (282 aa).

Residues aspartate 85, histidine 142, and serine 244 each act as charge relay system; for autoendoproteolytic cleavage activity in the active site. The active-site Schiff-base intermediate with substrate; via pyruvic acid; for decarboxylase activity is the serine 244. Pyruvic acid (Ser); by autocatalysis is present on serine 244.

The protein belongs to the phosphatidylserine decarboxylase family. PSD-B subfamily. Prokaryotic type I sub-subfamily. In terms of assembly, heterodimer of a large membrane-associated beta subunit and a small pyruvoyl-containing alpha subunit. It depends on pyruvate as a cofactor. In terms of processing, is synthesized initially as an inactive proenzyme. Formation of the active enzyme involves a self-maturation process in which the active site pyruvoyl group is generated from an internal serine residue via an autocatalytic post-translational modification. Two non-identical subunits are generated from the proenzyme in this reaction, and the pyruvate is formed at the N-terminus of the alpha chain, which is derived from the carboxyl end of the proenzyme. The autoendoproteolytic cleavage occurs by a canonical serine protease mechanism, in which the side chain hydroxyl group of the serine supplies its oxygen atom to form the C-terminus of the beta chain, while the remainder of the serine residue undergoes an oxidative deamination to produce ammonia and the pyruvoyl prosthetic group on the alpha chain. During this reaction, the Ser that is part of the protease active site of the proenzyme becomes the pyruvoyl prosthetic group, which constitutes an essential element of the active site of the mature decarboxylase.

The protein localises to the cell membrane. The enzyme catalyses a 1,2-diacyl-sn-glycero-3-phospho-L-serine + H(+) = a 1,2-diacyl-sn-glycero-3-phosphoethanolamine + CO2. The protein operates within phospholipid metabolism; phosphatidylethanolamine biosynthesis; phosphatidylethanolamine from CDP-diacylglycerol: step 2/2. Functionally, catalyzes the formation of phosphatidylethanolamine (PtdEtn) from phosphatidylserine (PtdSer). This chain is Phosphatidylserine decarboxylase proenzyme, found in Coxiella burnetii (strain Dugway 5J108-111).